The primary structure comprises 320 residues: Cytochrome f (320 aa).

Residues 1–35 (MQTRNAFSYIKEEITRSISVLLVIYIIIRAPISNA) form the signal peptide. Tyr-36, Cys-56, Cys-59, and His-60 together coordinate heme. Residues 286–305 (VQGLLFFLASIIFAQIFLVL) traverse the membrane as a helical segment.

Belongs to the cytochrome f family. The 4 large subunits of the cytochrome b6-f complex are cytochrome b6, subunit IV (17 kDa polypeptide, petD), cytochrome f and the Rieske protein, while the 4 small subunits are PetG, PetL, PetM and PetN. The complex functions as a dimer. The cofactor is heme.

Its subcellular location is the plastid. It localises to the chloroplast thylakoid membrane. Functionally, component of the cytochrome b6-f complex, which mediates electron transfer between photosystem II (PSII) and photosystem I (PSI), cyclic electron flow around PSI, and state transitions. The polypeptide is Cytochrome f (Lotus japonicus (Lotus corniculatus var. japonicus)).